Reading from the N-terminus, the 3401-residue chain is Genome polyprotein (3401 aa).

Residues 1–104 lie on the Cytoplasmic side of the membrane; sequence MPVRPRNKPK…GRKKRRSMTH (104 aa). Positions 101 to 117 are cleaved as a propeptide — ER anchor for the capsid protein C, removed in mature form by serine protease NS3; it reads SMTHGIILSLGVTMVIG. Residues 105 to 125 traverse the membrane as a helical segment; it reads GIILSLGVTMVIGASLHHHGG. Over 126–240 the chain is Extracellular; it reads RYLLNVTHAD…GERQIQRIER (115 aa). 2 N-linked (GlcNAc...) asparagine; by host glycosylation sites follow: N130 and N146. A helical transmembrane segment spans residues 241–261; sequence WMMRNPFYAAISLLLAWWVGS. Residues 262 to 266 are Cytoplasmic-facing; it reads DIKQK. Residues 267–281 traverse the membrane as a helical segment; the sequence is VLIAFLVLAIGPAYS. Over 282–725 the chain is Extracellular; sequence THCVGIPKRD…HTVFGNVFHS (444 aa). 5 cysteine pairs are disulfide-bonded: C284–C311, C355–C386, C373–C397, C462–C564, and C581–C611. Positions 379–392 are fusion peptide; the sequence is DRGWGNGCGLFGKG. Residues 726 to 746 traverse the membrane as a helical segment; it reads IFGGLSWITKIILGGMFLWLG. Topologically, residues 747-753 are extracellular; the sequence is VNSRNQT. A helical membrane pass occupies residues 754–774; it reads MCMVLMAVGGILLFMTLGVSG. The Extracellular segment spans residues 775-1122; it reads EVGCSLDIKR…NVHEEHLVRS (348 aa). 6 disulfide bridges follow: C778–C789, C829–C916, C952–C997, C1054–C1103, C1065–C1087, and C1086–C1090. N-linked (GlcNAc...) asparagine; by host glycosylation is found at N904 and N981. The helical transmembrane segment at 1123–1143 threads the bilayer; that stretch reads WASAGTGMAESSLGLVALFLF. Over 1144–1198 the chain is Cytoplasmic; it reads TDIFARKRMTRKFMVIGCLGVLSVMIVGGFTALDLIRYIIVVGQHFASMNHGGDV. The helical transmembrane segment at 1199–1219 threads the bilayer; it reads AYLAIIAVGKLRPGLLMMYSF. Over 1220–1287 the chain is Lumenal; that stretch reads KAAWSPKERV…PILALLTPLS (68 aa). A helical transmembrane segment spans residues 1288 to 1308; the sequence is MEIIRKTGIFACVGLLGLSLW. The Cytoplasmic portion of the chain corresponds to 1309–1352; that stretch reads RGGDTTMRKGMPLLAGAATAASGLTRASLSVVFILCATAASRRS. Residues 1353 to 1373 traverse the membrane as a helical segment; that stretch reads WPIGEIMAIVGIVGTGFGMAV. Residues 1374-1376 are Lumenal-facing; sequence NDQ. A helical membrane pass occupies residues 1377 to 1397; that stretch reads ASLAGPMLVFGLIMIVYATLG. Residues 1398 to 1447 lie on the Cytoplasmic side of the membrane; that stretch reads RADGLTLKRVGDITWEEEAVHSGSSTRYDVTLNEAGEFKLVHEEPVVWSH. The tract at residues 1404–1443 is interacts with and activates NS3 protease; it reads LKRVGDITWEEEAVHSGSSTRYDVTLNEAGEFKLVHEEPV. The helical intramembrane region spans 1448-1468; it reads VVFLVVALIAASVHPIALVVV. Topologically, residues 1469–2154 are cytoplasmic; that stretch reads TIIWTYGKKH…ASTNAPEAVT (686 aa). In terms of domain architecture, Peptidase S7 spans 1481–1661; the sequence is GGVLWDIPIA…GGEGVTEEPL (181 aa). Active-site charge relay system; for serine protease NS3 activity residues include H1532, D1556, and S1617. Residues 1665-1821 form the Helicase ATP-binding domain; it reads ATMLRKGKLT…ESNGEIEDLR (157 aa). The interval 1669–1672 is important for RNA-binding; it reads RKGK. 1678–1685 is an ATP binding site; sequence YHPGAGKT. Residues 1769–1772 carry the DEAH box motif; sequence DEAH. In terms of domain architecture, Helicase C-terminal spans 1816–1995; sequence EIEDLRRDIP…GMVAPLYDVE (180 aa). The chain crosses the membrane as a helical span at residues 2155–2175; it reads ILLMTGIVVACTLGVGLAFMW. Residues 2176 to 2181 are Lumenal-facing; it reads PKGVDK. The segment at residues 2182–2200 is an intramembrane region (helical); that stretch reads MSMGMITMSIAGYLMLQGG. A topological domain (lumenal) is located at residue L2201. The chain crosses the membrane as a helical span at residues 2202–2222; the sequence is TPVQVASVLLIFFIFMVVLIP. The Cytoplasmic portion of the chain corresponds to 2223–2235; it reads EAGTQRSINDNKT. The helical transmembrane segment at 2236–2250 threads the bilayer; sequence LYVLLGVALLIGAIT. The Cytoplasmic segment spans residues 2251 to 2285; sequence ANEMGYLEKTKRDLLGERVQNEWKLELPMFDLRPG. Residues 2286–2306 constitute an intramembrane region (helical); that stretch reads AAWSIYVGLATLVMPVLDHWI. At 2307-2354 the chain is on the lumenal side; it reads RTEYGSLSLTGIAQQASILQAMDKGVPFFKLNMSVIVLLVSVWNNFSM. Residues 2355–2375 traverse the membrane as a helical segment; sequence LSVLCGVGLLGVHCAFVLPGL. At 2376-2418 the chain is on the cytoplasmic side; sequence RAQAAKQAQRRVYHGVAKNPVVDGQTTAEIETAPEMPPLYEKK. The helical transmembrane segment at 2419 to 2439 threads the bilayer; it reads LALVLLGVVAIANGVMVRSAF. Over 2440 to 2467 the chain is Lumenal; it reads SMAETVVLLSAAVGPLLEGNTSAIWNGP. The helical transmembrane segment at 2468–2488 threads the bilayer; that stretch reads MAVAMAGIMRGNYYAGIGLAY. The Cytoplasmic portion of the chain corresponds to 2489–3401; the sequence is NLWILQSPKR…YSVQEVGTVL (913 aa). The mRNA cap 0-1 NS5-type MT domain maps to 2499–2763; the sequence is GRSTTMTLGE…DVVFPTGTRN (265 aa). S2554 is an S-adenosyl-L-methionine binding site. S2554 is modified (phosphoserine). K2559 functions as the For 2'-O-MTase activity in the catalytic mechanism. The S-adenosyl-L-methionine site is built by G2584, W2585, T2602, L2603, D2629, and V2630. The For 2'-O-MTase activity role is filled by D2644. I2645 contributes to the S-adenosyl-L-methionine binding site. Residues K2680 and E2716 each act as for 2'-O-MTase activity in the active site. Y2718 contacts S-adenosyl-L-methionine. Positions 2869 to 2902 match the Nuclear localization signal motif; sequence RAIMEVVNKWMFDFLAREKAPRICTKEEFINKVR. Positions 2936, 2940, 2945, and 2948 each coordinate Zn(2+). Positions 3026-3178 constitute a RdRp catalytic domain; sequence GIMYADDTAG…APLDERFGLA (153 aa). Positions 3213, 3229, and 3348 each coordinate Zn(2+).

In the N-terminal section; belongs to the class I-like SAM-binding methyltransferase superfamily. mRNA cap 0-1 NS5-type methyltransferase family. Homodimer. Interacts (via N-terminus) with host EXOC1 (via C-terminus); this interaction results in EXOC1 degradation through the proteasome degradation pathway. As to quaternary structure, forms heterodimers with envelope protein E in the endoplasmic reticulum and Golgi. In terms of assembly, homodimer; in the endoplasmic reticulum and Golgi. Interacts with protein prM. Interacts with non-structural protein 1. Homodimer; Homohexamer when secreted. Interacts with envelope protein E. NS1 interacts with NS4B. Interacts with host complement protein CFH; this interaction leads to the degradation of C3. As to quaternary structure, interacts (via N-terminus) with serine protease NS3. In terms of assembly, forms a heterodimer with serine protease NS3. May form homooligomers. Forms a heterodimer with NS2B. Interacts with non-structural protein 2A (via N-terminus). Interacts with NS4B. Interacts with unphosphorylated RNA-directed RNA polymerase NS5; this interaction stimulates RNA-directed RNA polymerase NS5 guanylyltransferase activity. NS3 interacts with host PDCD6IP; this interaction contributes to virion release. As to quaternary structure, interacts with serine protease NS3. In terms of assembly, homodimer. Interacts with host STAT2; this interaction prevents the establishment of cellular antiviral state. Interacts with serine protease NS3. Interacts with host TRIM23; this interaction leads to NS5 ubiquitination. Post-translationally, specific enzymatic cleavages in vivo yield mature proteins. The nascent capsid protein C contains a C-terminal hydrophobic domain that act as a signal sequence for translocation of prM into the lumen of the ER. Mature capsid protein C is cleaved at a site upstream of this hydrophobic domain by NS3. prM is cleaved in post-Golgi vesicles by a host furin, releasing the mature small envelope protein M, and peptide pr. Non-structural protein 2A-alpha, a C-terminally truncated form of non-structural protein 2A, results from partial cleavage by NS3. Specific enzymatic cleavages in vivo yield mature proteins peptide 2K acts as a signal sequence and is removed from the N-terminus of NS4B by the host signal peptidase in the ER lumen. Signal cleavage at the 2K-4B site requires a prior NS3 protease-mediated cleavage at the 4A-2K site. In terms of processing, cleaved in post-Golgi vesicles by a host furin, releasing the mature small envelope protein M, and peptide pr. This cleavage is incomplete as up to 30% of viral particles still carry uncleaved prM. N-glycosylated. Post-translationally, N-glycosylated. The excreted form is glycosylated and this is required for efficient secretion of the protein from infected cells. In terms of processing, polyubiquitinated; ubiquitination is probably mediated by host TRIM23 and is prerequisite for NS5-STAT2 interaction. NS5 is not ISGylated or sumoylated. Phosphorylated on serines residues. This phosphorylation may trigger NS5 nuclear localization.

The protein resides in the virion. The protein localises to the host nucleus. It localises to the host cytoplasm. Its subcellular location is the host perinuclear region. It is found in the virion membrane. The protein resides in the host endoplasmic reticulum membrane. The protein localises to the secreted. It carries out the reaction Selective hydrolysis of -Xaa-Xaa-|-Yaa- bonds in which each of the Xaa can be either Arg or Lys and Yaa can be either Ser or Ala.. It catalyses the reaction RNA(n) + a ribonucleoside 5'-triphosphate = RNA(n+1) + diphosphate. The catalysed reaction is a ribonucleoside 5'-triphosphate + H2O = a ribonucleoside 5'-diphosphate + phosphate + H(+). The enzyme catalyses ATP + H2O = ADP + phosphate + H(+). It carries out the reaction a 5'-end (5'-triphosphoguanosine)-ribonucleoside in mRNA + S-adenosyl-L-methionine = a 5'-end (N(7)-methyl 5'-triphosphoguanosine)-ribonucleoside in mRNA + S-adenosyl-L-homocysteine. It catalyses the reaction a 5'-end (N(7)-methyl 5'-triphosphoguanosine)-ribonucleoside in mRNA + S-adenosyl-L-methionine = a 5'-end (N(7)-methyl 5'-triphosphoguanosine)-(2'-O-methyl-ribonucleoside) in mRNA + S-adenosyl-L-homocysteine + H(+). In terms of biological role, plays a role in virus budding by binding to the cell membrane and gathering the viral RNA into a nucleocapsid that forms the core of a mature virus particle. During virus entry, may induce genome penetration into the host cytoplasm after hemifusion induced by the surface proteins. Can migrate to the cell nucleus where it modulates host functions. Inhibits RNA silencing by interfering with host Dicer. Its function is as follows. Prevents premature fusion activity of envelope proteins in trans-Golgi by binding to envelope protein E at pH6.0. After virion release in extracellular space, gets dissociated from E dimers. Functionally, acts as a chaperone for envelope protein E during intracellular virion assembly by masking and inactivating envelope protein E fusion peptide. prM is the only viral peptide matured by host furin in the trans-Golgi network probably to avoid catastrophic activation of the viral fusion activity in acidic Golgi compartment prior to virion release. prM-E cleavage is inefficient, and many virions are only partially matured. These uncleaved prM would play a role in immune evasion. In terms of biological role, may play a role in virus budding. Exerts cytotoxic effects by activating a mitochondrial apoptotic pathway through M ectodomain. May display a viroporin activity. Binds to host cell surface receptor and mediates fusion between viral and cellular membranes. Envelope protein is synthesized in the endoplasmic reticulum in the form of heterodimer with protein prM. They play a role in virion budding in the ER, and the newly formed immature particle is covered with 60 spikes composed of heterodimer between precursor prM and envelope protein E. The virion is transported to the Golgi apparatus where the low pH causes dissociation of PrM-E heterodimers and formation of E homodimers. prM-E cleavage is inefficient, and many virions are only partially matured. These uncleaved prM would play a role in immune evasion. Its function is as follows. Involved in immune evasion, pathogenesis and viral replication. Once cleaved off the polyprotein, is targeted to three destinations: the viral replication cycle, the plasma membrane and the extracellular compartment. Essential for viral replication. Required for formation of the replication complex and recruitment of other non-structural proteins to the ER-derived membrane structures. Excreted as a hexameric lipoparticle that plays a role against host immune response. Antagonizing the complement function. Binds to the host macrophages and dendritic cells. Inhibits signal transduction originating from Toll-like receptor 3 (TLR3). Functionally, component of the viral RNA replication complex that functions in virion assembly and antagonizes the host immune response. In terms of biological role, required cofactor for the serine protease function of NS3. May have membrane-destabilizing activity and form viroporins. Displays three enzymatic activities: serine protease, NTPase and RNA helicase. NS3 serine protease, in association with NS2B, performs its autocleavage and cleaves the polyprotein at dibasic sites in the cytoplasm: C-prM, NS2A-NS2B, NS2B-NS3, NS3-NS4A, NS4A-2K and NS4B-NS5. NS3 RNA helicase binds RNA and unwinds dsRNA in the 3' to 5' direction. Also plays a role in virus assembly. Its function is as follows. Regulates the ATPase activity of the NS3 helicase activity. NS4A allows NS3 helicase to conserve energy during unwinding. Functionally, functions as a signal peptide for NS4B and is required for the interferon antagonism activity of the latter. In terms of biological role, induces the formation of ER-derived membrane vesicles where the viral replication takes place. Inhibits interferon (IFN)-induced host STAT1 phosphorylation and nuclear translocation, thereby preventing the establishment of cellular antiviral state by blocking the IFN-alpha/beta pathway. Replicates the viral (+) and (-) RNA genome, and performs the capping of genomes in the cytoplasm. NS5 methylates viral RNA cap at guanine N-7 and ribose 2'-O positions. Besides its role in RNA genome replication, also prevents the establishment of cellular antiviral state by blocking the interferon-alpha/beta (IFN-alpha/beta) signaling pathway. IFN-I induces binding of NS5 to host IFN-activated transcription factor STAT2, preventing its transcriptional activity. Host TRIM23 is the E3 ligase that interacts with and polyubiquitinates NS5 to promote its binding to STAT2 and trigger IFN-I signaling inhibition. This chain is Genome polyprotein, found in Edge Hill virus (EHV).